The primary structure comprises 623 residues: Lamin-B2.L (623 aa).

Positions 1-18 are enriched in low complexity; sequence MATTTPSRSTRSSMQSPA. The interval 1–30 is disordered; sequence MATTTPSRSTRSSMQSPARGTSTPLSPTRI. The tract at residues 2–27 is head; it reads ATTTPSRSTRSSMQSPARGTSTPLSP. Polar residues predominate over residues 19–30; it reads RGTSTPLSPTRI. Serine 26 bears the Phosphoserine mark. The segment at 28 to 64 is coil 1A; that stretch reads TRISRLQEKEELRHLNDRLAVYIDRVRALELENDRLM. Residues 35 to 391 enclose the IF rod domain; the sequence is EKEELRHLND…KLLEGEEERL (357 aa). The interval 64–74 is linker 1; that stretch reads MVKISEKEEVT. The segment at 75–211 is coil 1B; sequence TREVSGIKNL…QSLQEEMDFR (137 aa). A linker 2 region spans residues 212–235; it reads KNIYEEESRETRKRHERRIVEVDR. The coil 2 stretch occupies residues 236–378; the sequence is GHHYDYESKL…VKLALDLEIN (143 aa). Positions 380–592 are tail; it reads YRKLLEGEEE…VTKSVLRNVE (213 aa). 2 disordered regions span residues 388–473 and 591–623; these read EERL…LSQQ and VEEE…CSVM. At serine 396 the chain carries Phosphoserine. The span at 398 to 416 shows a compositional bias: low complexity; sequence ESRVTVSRATSSSSSATRT. The short motif at 420-425 is the Nuclear localization signal element; that stretch reads KRRRVE. The span at 443-473 shows a compositional bias: polar residues; that stretch reads LGSSRITASEGSSRTITSGQSSTTRFHLSQQ. The LTD domain maps to 468 to 585; it reads FHLSQQASAT…EEVAVRTVTK (118 aa). A compositionally biased stretch (acidic residues) spans 592 to 604; the sequence is EEEEDEDADFGEE. Over residues 612-623 the composition is skewed to polar residues; the sequence is DPRTTSRGCSVM. Position 620 is a cysteine methyl ester (cysteine 620). Cysteine 620 carries S-farnesyl cysteine lipidation. Residues 621–623 constitute a propeptide, removed in mature form; that stretch reads SVM.

This sequence belongs to the intermediate filament family. Post-translationally, phosphorylation plays a key role in lamin organization, subcellular localization and nuclear envelope disintegration. Phosphorylation by CDK1 at Ser-26 at the onset of mitosis drives lamin disassembly and nuclear envelope breakdown.

The protein localises to the nucleus lamina. It localises to the nucleus envelope. Its subcellular location is the nucleus. It is found in the nucleoplasm. The protein resides in the nucleus matrix. Lamins are intermediate filament proteins that assemble into a filamentous meshwork, and which constitute the major components of the nuclear lamina, a fibrous layer on the nucleoplasmic side of the inner nuclear membrane. Lamins provide a framework for the nuclear envelope, bridging the nuclear envelope and chromatin, thereby playing an important role in nuclear assembly, chromatin organization, nuclear membrane and telomere dynamics. The structural integrity of the lamina is strictly controlled by the cell cycle, as seen by the disintegration and formation of the nuclear envelope in prophase and telophase, respectively. The chain is Lamin-B2.L (lmnb2.L) from Xenopus laevis (African clawed frog).